The chain runs to 353 residues: O-antigen chain mannosyltransferase RfbU (353 aa).

This sequence belongs to the glycosyltransferase group 1 family. Glycosyltransferase 4 subfamily.

It catalyses the reaction alpha-L-rhamnosyl-(1-&gt;3)-alpha-D-galactosyl-1-diphospho-di-trans,octa-cis-undecaprenol + GDP-alpha-D-mannose = alpha-D-Man-(1-&gt;4)-alpha-L-Rha-(1-&gt;3)-alpha-D-Gal-di-trans,octa-cis-undecaprenyl diphosphate + GDP + H(+). Its pathway is bacterial outer membrane biogenesis; LPS O-antigen biosynthesis. In terms of biological role, mannosyltransferase involved in the biosynthesis of the repeat unit of the lipopolysaccharide (LPS) O-antigen region. Catalyzes the addition of a mannose to the rhamnosyl-galactosyl-undecaprenyl diphosphate intermediate. The sequence is that of O-antigen chain mannosyltransferase RfbU from Salmonella typhimurium (strain LT2 / SGSC1412 / ATCC 700720).